Reading from the N-terminus, the 946-residue chain is DNA primase (946 aa).

The tract at residues 596 to 626 (RDTEEDEDGKENKNNVPDNGVFQKTTSSVDT) is disordered. Residues 617–626 (FQKTTSSVDT) show a composition bias toward polar residues. The segment at 881 to 920 (CLNYTHRNPQETVQVFIDLRTEHSYALWASLWSRCFTKKC) adopts a CHC2-type zinc-finger fold.

The protein belongs to the herpesviridae DNA primase family. In terms of assembly, associates with the helicase and the primase-associated factor to form the helicase-primase factor. Interacts with host SNAPIN.

It localises to the host nucleus. In terms of biological role, essential component of the helicase/primase complex. Unwinds the DNA at the replication forks and generates single-stranded DNA for both leading and lagging strand synthesis. The primase initiates primer synthesis and thereby produces large amount of short RNA primers on the lagging strand that the polymerase elongates using dNTPs. This Homo sapiens (Human) protein is DNA primase (UL70).